Reading from the N-terminus, the 806-residue chain is Phenylalanine--tRNA ligase beta subunit (806 aa).

The tRNA-binding domain maps to 44–158 (ADGLSKLVVG…EEAVPGDAIF (115 aa)). The B5 domain maps to 411-486 (TEPVEVSTSL…RIYGYDKLPT (76 aa)). The Mg(2+) site is built by aspartate 464, aspartate 470, glutamate 473, and glutamate 474. Positions 713-806 (TKFPAMTRDV…LTEQVGAEVR (94 aa)) constitute an FDX-ACB domain.

Belongs to the phenylalanyl-tRNA synthetase beta subunit family. Type 1 subfamily. As to quaternary structure, tetramer of two alpha and two beta subunits. Requires Mg(2+) as cofactor.

The protein localises to the cytoplasm. It carries out the reaction tRNA(Phe) + L-phenylalanine + ATP = L-phenylalanyl-tRNA(Phe) + AMP + diphosphate + H(+). In Streptococcus pyogenes serotype M28 (strain MGAS6180), this protein is Phenylalanine--tRNA ligase beta subunit.